A 370-amino-acid chain; its full sequence is DNA replication and repair protein RecF (370 aa).

30 to 37 (GDNGSGKT) serves as a coordination point for ATP.

The protein belongs to the RecF family.

The protein resides in the cytoplasm. Functionally, the RecF protein is involved in DNA metabolism; it is required for DNA replication and normal SOS inducibility. RecF binds preferentially to single-stranded, linear DNA. It also seems to bind ATP. This chain is DNA replication and repair protein RecF, found in Stutzerimonas stutzeri (strain A1501) (Pseudomonas stutzeri).